Here is a 749-residue protein sequence, read N- to C-terminus: Chaperone protein DnaK 1 (749 aa).

Thr-198 carries the phosphothreonine; by autocatalysis modification. Basic and acidic residues-rich tracts occupy residues 643-653 (RWDADPWDRSR), 661-694 (YDDRRSPVSDPYRGERWVEEQTSMSRREPVRDRN), and 711-724 (PTWEEDQPPRRDRS). The tract at residues 643–749 (RWDADPWDRS…GWDDDDDEWF (107 aa)) is disordered. Over residues 740–749 (GWDDDDDEWF) the composition is skewed to acidic residues.

It belongs to the heat shock protein 70 family.

Its function is as follows. Acts as a chaperone. This is Chaperone protein DnaK 1 from Synechococcus sp. (strain ATCC 27144 / PCC 6301 / SAUG 1402/1) (Anacystis nidulans).